A 306-amino-acid polypeptide reads, in one-letter code: Serine/threonine-protein phosphatase PP-X homolog 4 (306 aa).

Mn(2+)-binding residues include aspartate 53, histidine 55, aspartate 81, and asparagine 113. Histidine 114 acts as the Proton donor in catalysis. 2 residues coordinate Mn(2+): histidine 163 and histidine 237.

It belongs to the PPP phosphatase family. PP-4 (PP-X) subfamily. Mn(2+) is required as a cofactor.

It catalyses the reaction O-phospho-L-seryl-[protein] + H2O = L-seryl-[protein] + phosphate. The enzyme catalyses O-phospho-L-threonyl-[protein] + H2O = L-threonyl-[protein] + phosphate. The protein is Serine/threonine-protein phosphatase PP-X homolog 4 (Ppx4) of Paramecium tetraurelia.